Reading from the N-terminus, the 483-residue chain is Glutathione reductase (483 aa).

N-acetylmethionine is present on Met-1. At Leu-2 the chain carries N-acetylserine. FAD contacts are provided by Ser-33 and Gly-34. Ser-33 provides a ligand contact to glutathione. A glutathione-binding site is contributed by Arg-40. Positions 53, 60, 61, and 69 each coordinate FAD. Residues Cys-61 and Cys-66 are joined by a disulfide bond. Residue Tyr-123 participates in glutathione binding. Ala-139 is a binding site for FAD. Residues Ala-205, Ile-208, Glu-211, Arg-228, and Arg-234 each contribute to the NADP(+) site. Thr-243 contributes to the glutathione binding site. N-linked (GlcNAc...) asparagine glycosylation is present at Asn-278. Gly-294 contacts NADP(+). Asp-334 serves as a coordination point for FAD. Glu-340 serves as a coordination point for NADP(+). Thr-342 is an FAD binding site. Arg-350 serves as a coordination point for glutathione. An NADP(+)-binding site is contributed by Val-375. A glutathione-binding site is contributed by Lys-425. His-472 contributes to the FAD binding site. His-472 (proton acceptor) is an active-site residue.

The protein belongs to the class-I pyridine nucleotide-disulfide oxidoreductase family. Homodimer. Requires FAD as cofactor.

Its subcellular location is the cytoplasm. The protein resides in the nucleus. It localises to the mitochondrion. The protein localises to the peroxisome. It catalyses the reaction 2 glutathione + NADP(+) = glutathione disulfide + NADPH + H(+). Functionally, catalyzes the reduction of glutathione disulfide (GSSG) to reduced glutathione (GSH). Constitutes the major mechanism to maintain a high GSH:GSSG ratio in the cytosol. This chain is Glutathione reductase, found in Saccharomyces cerevisiae (strain ATCC 204508 / S288c) (Baker's yeast).